The following is a 170-amino-acid chain: Orotate phosphoribosyltransferase (170 aa).

5-phospho-alpha-D-ribose 1-diphosphate contacts are provided by residues arginine 86, lysine 87, lysine 90, histidine 92, and 111 to 119; that span reads EDVTTSGGS. Orotate-binding residues include threonine 115 and arginine 143.

This sequence belongs to the purine/pyrimidine phosphoribosyltransferase family. PyrE subfamily. Homodimer. Mg(2+) serves as cofactor.

The catalysed reaction is orotidine 5'-phosphate + diphosphate = orotate + 5-phospho-alpha-D-ribose 1-diphosphate. Its pathway is pyrimidine metabolism; UMP biosynthesis via de novo pathway; UMP from orotate: step 1/2. In terms of biological role, catalyzes the transfer of a ribosyl phosphate group from 5-phosphoribose 1-diphosphate to orotate, leading to the formation of orotidine monophosphate (OMP). The polypeptide is Orotate phosphoribosyltransferase (Methanoculleus marisnigri (strain ATCC 35101 / DSM 1498 / JR1)).